The primary structure comprises 366 residues: Type 2 DNA topoisomerase 6 subunit A (366 aa).

In terms of domain architecture, Topo IIA-type catalytic spans Ser-7 to Ala-146. Tyr-101 functions as the O-(5'-phospho-DNA)-tyrosine intermediate in the catalytic mechanism. Mg(2+) contacts are provided by Glu-199 and Asp-251.

Belongs to the TOP6A family. In terms of assembly, homodimer. Heterotetramer of two Top6A and two Top6B chains. Mg(2+) is required as a cofactor.

It catalyses the reaction ATP-dependent breakage, passage and rejoining of double-stranded DNA.. In terms of biological role, relaxes both positive and negative superturns and exhibits a strong decatenase activity. The polypeptide is Type 2 DNA topoisomerase 6 subunit A (Halobacterium salinarum (strain ATCC 700922 / JCM 11081 / NRC-1) (Halobacterium halobium)).